The chain runs to 238 residues: Purine nucleoside phosphorylase DeoD-type 1 (238 aa).

Histidine 5 lines the a purine D-ribonucleoside pocket. Phosphate contacts are provided by residues glycine 21, arginine 25, arginine 44, and 88–91 (RVGS). A purine D-ribonucleoside contacts are provided by residues 180 to 182 (EME) and 204 to 205 (SD). Catalysis depends on aspartate 205, which acts as the Proton donor.

This sequence belongs to the PNP/UDP phosphorylase family. Homohexamer; trimer of homodimers.

The catalysed reaction is a purine D-ribonucleoside + phosphate = a purine nucleobase + alpha-D-ribose 1-phosphate. It carries out the reaction a purine 2'-deoxy-D-ribonucleoside + phosphate = a purine nucleobase + 2-deoxy-alpha-D-ribose 1-phosphate. Catalyzes the reversible phosphorolytic breakdown of the N-glycosidic bond in the beta-(deoxy)ribonucleoside molecules, with the formation of the corresponding free purine bases and pentose-1-phosphate. This chain is Purine nucleoside phosphorylase DeoD-type 1, found in Aliivibrio fischeri (strain ATCC 700601 / ES114) (Vibrio fischeri).